Consider the following 406-residue polypeptide: Argininosuccinate synthase (406 aa).

8-16 (AYSGGLDTT) provides a ligand contact to ATP. L-citrulline is bound by residues tyrosine 86 and serine 91. Glycine 116 is an ATP binding site. 3 residues coordinate L-aspartate: threonine 118, asparagine 122, and aspartate 123. An L-citrulline-binding site is contributed by asparagine 122. L-citrulline is bound by residues arginine 126, serine 175, serine 184, glutamate 261, and tyrosine 273.

It belongs to the argininosuccinate synthase family. Type 1 subfamily. In terms of assembly, homotetramer.

It is found in the cytoplasm. It carries out the reaction L-citrulline + L-aspartate + ATP = 2-(N(omega)-L-arginino)succinate + AMP + diphosphate + H(+). It participates in amino-acid biosynthesis; L-arginine biosynthesis; L-arginine from L-ornithine and carbamoyl phosphate: step 2/3. This chain is Argininosuccinate synthase, found in Brachyspira hyodysenteriae (strain ATCC 49526 / WA1).